The sequence spans 2242 residues: DEP domain-containing protein DDB_G0279099 (2242 aa).

Disordered regions lie at residues 388–465 (SQNT…SNNS), 576–644 (DSNA…YSRV), 701–730 (PILR…FDQK), 871–965 (DPTT…TKKS), 1077–1194 (QLQL…AFNS), 1287–1336 (GSQQ…MNGS), 1384–1414 (SELL…ALPE), 1446–1471 (AQSS…NTSG), and 1502–1521 (SNNN…NSLN). The stretch at 392 to 440 (IQNNNNNNNNNNNNNNNNNNNNNNNNNNNNNNNNNNNNNSNNNKNNQNN) forms a coiled coil. Low complexity predominate over residues 581 to 614 (GGNNNNNYNNNNGNGNGHNHNNHNNNNNNNNNND). Over residues 622–631 (EPSDFSDTED) the composition is skewed to acidic residues. Polar residues-rich tracts occupy residues 632–642 (NSSTTPNSQYS) and 719–729 (HPISPSNSFDQ). Residues 872-955 (PTTTTTTGGT…PNSSNTVPNS (84 aa)) are compositionally biased toward low complexity. Residues 1066-1101 (IPTVENNQHQQQLQLEQQEKEKEKARLAALEKKKPF) adopt a coiled-coil conformation. Positions 1082-1106 (QQEKEKEKARLAALEKKKPFPREDS) are enriched in basic and acidic residues. Low complexity-rich tracts occupy residues 1108-1182 (STLI…ATTA) and 1287-1299 (GSQQ…GSQS). Polar residues predominate over residues 1300–1311 (APTSPLTPHKNI). Composition is skewed to low complexity over residues 1312–1336 (NTNN…MNGS), 1384–1410 (SELL…GENN), and 1446–1470 (AQSS…TNTS). One can recognise a DEP domain in the interval 1556-1629 (IGIKMTERKY…DGQFYYRLKE (74 aa)). Residues 1645-1668 (TNNNFNNNNTNSNNNQQQQQQQQS) show a composition bias toward low complexity. Disordered stretches follow at residues 1645-1763 (TNNN…SMSN), 1803-1910 (DEAN…QQQQ), 2122-2145 (NYNN…NLLK), and 2165-2218 (NSDT…KNEM). A compositionally biased stretch (polar residues) spans 1669–1702 (IPSVTSSAVNSPNKDSNTPDHSPISSPKQIGNKL). 2 stretches are compositionally biased toward low complexity: residues 1703 to 1760 (SSSS…IQSS) and 1807 to 1848 (GDNN…SSNS). A coiled-coil region spans residues 1791–1821 (LTNKEKDKEKEIDEANGDNNNNNNNNNNNNN). Composition is skewed to polar residues over residues 1849–1871 (GQGS…TNPL) and 1879–1889 (YGSSVQNSNQH). 2 stretches are compositionally biased toward low complexity: residues 1890–1910 (QQQQ…QQQQ) and 2122–2133 (NYNNNNNNNNNN). Composition is skewed to basic and acidic residues over residues 2166–2181 (SDTE…DNNH) and 2192–2218 (DTDH…KNEM).

In the N-terminal section; belongs to the IML1 family.

The polypeptide is DEP domain-containing protein DDB_G0279099 (Dictyostelium discoideum (Social amoeba)).